Consider the following 224-residue polypeptide: uncharacterized protein (224 aa).

Positions 177, 197, and 206 each coordinate S-adenosyl-L-methionine.

Belongs to the class IV-like SAM-binding methyltransferase superfamily. RNA methyltransferase TrmH family.

This is an uncharacterized protein from Archaeoglobus fulgidus (strain ATCC 49558 / DSM 4304 / JCM 9628 / NBRC 100126 / VC-16).